The primary structure comprises 227 residues: Lipoprotein-releasing system ATP-binding protein LolD (227 aa).

An ABC transporter domain is found at 6–227 (LTSQKLYKSY…LHEGSLYARE (222 aa)). 42–49 (GPSGSGKS) provides a ligand contact to ATP.

This sequence belongs to the ABC transporter superfamily. Lipoprotein translocase (TC 3.A.1.125) family. As to quaternary structure, the complex is composed of two ATP-binding proteins (LolD) and two transmembrane proteins (LolC and LolE).

Its subcellular location is the cell inner membrane. Functionally, part of the ABC transporter complex LolCDE involved in the translocation of mature outer membrane-directed lipoproteins, from the inner membrane to the periplasmic chaperone, LolA. Responsible for the formation of the LolA-lipoprotein complex in an ATP-dependent manner. This chain is Lipoprotein-releasing system ATP-binding protein LolD, found in Legionella pneumophila (strain Lens).